The following is a 309-amino-acid chain: Homoserine O-succinyltransferase (309 aa).

The active-site Acyl-thioester intermediate is cysteine 142. Positions 163 and 192 each coordinate substrate. The Proton acceptor role is filled by histidine 235. Residue glutamate 237 is part of the active site. Position 249 (arginine 249) interacts with substrate.

It belongs to the MetA family. Homodimer.

Its subcellular location is the cytoplasm. It carries out the reaction L-homoserine + succinyl-CoA = O-succinyl-L-homoserine + CoA. Its pathway is amino-acid biosynthesis; L-methionine biosynthesis via de novo pathway; O-succinyl-L-homoserine from L-homoserine: step 1/1. Its function is as follows. Transfers a succinyl group from succinyl-CoA to L-homoserine, forming succinyl-L-homoserine. This Salmonella arizonae (strain ATCC BAA-731 / CDC346-86 / RSK2980) protein is Homoserine O-succinyltransferase.